The sequence spans 523 residues: 2-isopropylmalate synthase (523 aa).

Residues 5–267 (VIIFDTTLRD…HTAINHQEIW (263 aa)) enclose the Pyruvate carboxyltransferase domain. Positions 14, 202, 204, and 238 each coordinate Mn(2+). Residues 392 to 523 (RLDYFSVQSG…QHNENNKETV (132 aa)) are regulatory domain.

Belongs to the alpha-IPM synthase/homocitrate synthase family. LeuA type 1 subfamily. As to quaternary structure, homodimer. Requires Mn(2+) as cofactor.

The protein resides in the cytoplasm. It carries out the reaction 3-methyl-2-oxobutanoate + acetyl-CoA + H2O = (2S)-2-isopropylmalate + CoA + H(+). It participates in amino-acid biosynthesis; L-leucine biosynthesis; L-leucine from 3-methyl-2-oxobutanoate: step 1/4. Functionally, catalyzes the condensation of the acetyl group of acetyl-CoA with 3-methyl-2-oxobutanoate (2-ketoisovalerate) to form 3-carboxy-3-hydroxy-4-methylpentanoate (2-isopropylmalate). This Escherichia coli O127:H6 (strain E2348/69 / EPEC) protein is 2-isopropylmalate synthase.